The primary structure comprises 126 residues: UPF0538 protein C2orf76 homolog (126 aa).

It belongs to the UPF0538 family.

This Danio rerio (Zebrafish) protein is UPF0538 protein C2orf76 homolog.